Consider the following 209-residue polypeptide: ATP-dependent dethiobiotin synthetase BioD (209 aa).

ATP is bound at residue 13–18 (DIGKTV). Thr-17 is a Mg(2+) binding site. Residue Lys-33 is part of the active site. Residues Arg-47 and Glu-100 each coordinate Mg(2+). Residues 100–103 (EGAG) and 184–186 (PRL) contribute to the ATP site.

It belongs to the dethiobiotin synthetase family. Homodimer. Mg(2+) is required as a cofactor.

It localises to the cytoplasm. It catalyses the reaction (7R,8S)-7,8-diammoniononanoate + CO2 + ATP = (4R,5S)-dethiobiotin + ADP + phosphate + 3 H(+). Its pathway is cofactor biosynthesis; biotin biosynthesis; biotin from 7,8-diaminononanoate: step 1/2. Catalyzes a mechanistically unusual reaction, the ATP-dependent insertion of CO2 between the N7 and N8 nitrogen atoms of 7,8-diaminopelargonic acid (DAPA, also called 7,8-diammoniononanoate) to form a ureido ring. This Rhodopseudomonas palustris (strain BisB18) protein is ATP-dependent dethiobiotin synthetase BioD.